The primary structure comprises 254 residues: Probable phosphatase Sbal223_2880 (254 aa).

His-8, His-10, His-16, His-41, Glu-74, His-102, His-132, Asp-193, and His-195 together coordinate Zn(2+).

Belongs to the PHP family. Zn(2+) serves as cofactor.

The sequence is that of Probable phosphatase Sbal223_2880 from Shewanella baltica (strain OS223).